A 715-amino-acid chain; its full sequence is Fatty acid oxidation complex subunit alpha (715 aa).

The enoyl-CoA hydratase/isomerase stretch occupies residues 1–190 (MIYEGKAITV…KVGAVDAVVA (190 aa)). Asp-297 contributes to the substrate binding site. A 3-hydroxyacyl-CoA dehydrogenase region spans residues 312–715 (KDVKQAAVLG…MAKNGQSFFG (404 aa)). Residues Met-325, Asp-344, 401 to 403 (VVE), Lys-408, and Ser-430 contribute to the NAD(+) site. His-451 functions as the For 3-hydroxyacyl-CoA dehydrogenase activity in the catalytic mechanism. Asn-454 is an NAD(+) binding site. Substrate-binding residues include Asn-501 and Tyr-660.

In the N-terminal section; belongs to the enoyl-CoA hydratase/isomerase family. The protein in the C-terminal section; belongs to the 3-hydroxyacyl-CoA dehydrogenase family. Heterotetramer of two alpha chains (FadB) and two beta chains (FadA).

It catalyses the reaction a (3S)-3-hydroxyacyl-CoA + NAD(+) = a 3-oxoacyl-CoA + NADH + H(+). The enzyme catalyses a (3S)-3-hydroxyacyl-CoA = a (2E)-enoyl-CoA + H2O. The catalysed reaction is a 4-saturated-(3S)-3-hydroxyacyl-CoA = a (3E)-enoyl-CoA + H2O. It carries out the reaction (3S)-3-hydroxybutanoyl-CoA = (3R)-3-hydroxybutanoyl-CoA. It catalyses the reaction a (3Z)-enoyl-CoA = a 4-saturated (2E)-enoyl-CoA. The enzyme catalyses a (3E)-enoyl-CoA = a 4-saturated (2E)-enoyl-CoA. Its pathway is lipid metabolism; fatty acid beta-oxidation. Its function is as follows. Involved in the aerobic and anaerobic degradation of long-chain fatty acids via beta-oxidation cycle. Catalyzes the formation of 3-oxoacyl-CoA from enoyl-CoA via L-3-hydroxyacyl-CoA. It can also use D-3-hydroxyacyl-CoA and cis-3-enoyl-CoA as substrate. This Pseudomonas fluorescens (strain ATCC BAA-477 / NRRL B-23932 / Pf-5) protein is Fatty acid oxidation complex subunit alpha.